The following is a 1142-amino-acid chain: Desmoglein-2.1 (1142 aa).

Residues 1-18 (MARRISPVVAFLLCFGLS) form the signal peptide. The propeptide occupies 19–38 (HFFEAEARLQHSVALHRQKR). The Extracellular segment spans residues 39–643 (EWIVPPQILE…AKKGSRLGPA (605 aa)). Cadherin domains are found at residues 64-148 (SDKE…APVF), 156-258 (VDEL…VPTL), 259-416 (GGPY…GPKF), and 417-527 (FPGT…CPTL). Residue asparagine 115 is glycosylated (N-linked (GlcNAc...) asparagine). Residues 369-389 (SGAAGGAGAMGGASGSGGGTG) are disordered. 2 N-linked (GlcNAc...) asparagine glycosylation sites follow: asparagine 490 and asparagine 576. Residues 644–664 (GIGLLLLALLALLLIPLLLLL) form a helical membrane-spanning segment. Topologically, residues 665-1142 (CTCGMTGAFT…RKVVTTQSVK (478 aa)) are cytoplasmic. Desmoglein repeat repeat units lie at residues 948 to 974 (VEQQPSTVLVAERPAMTQGMYVLNSGP), 975 to 998 (VAEGMVVQGGNIAANTLTRGERMV), 999 to 1039 (LVFR…VLQG), and 1040 to 1071 (TIQRGVAGSQGLMFVDGQGGQVIQGSINNGIS).

The protein resides in the cell junction. It is found in the desmosome. Its subcellular location is the cell membrane. The protein localises to the cytoplasm. A component of desmosome cell-cell junctions which are required for positive regulation of cellular adhesion. Involved in the interaction of plaque proteins and intermediate filaments mediating cell-cell adhesion. Required for embryogenesis, specifically for progression of epiboly and normal convergence-extension movements during gastrulation. The sequence is that of Desmoglein-2.1 from Danio rerio (Zebrafish).